The primary structure comprises 331 residues: Centriolar satellite-associated tubulin polyglutamylase complex regulator 1 (331 aa).

The interval 1–111 is required for interaction with PCM1; it reads MLSPERLALP…HCLLQLLCPD (111 aa). A required for interaction with TPGS1, LRRC49, and TTLL1 region spans residues 1–225; that stretch reads MLSPERLALP…SCPPPALVKE (225 aa). Positions 112–331 are required for interaction with TPGS2; it reads FPLELTQKAA…STEETDESET (220 aa). A disordered region spans residues 288 to 331; sequence SPEASCLPSRTPPRVGSPWRPLHHSRKVDGESDGSTEETDESET. The span at 318-331 shows a compositional bias: acidic residues; the sequence is ESDGSTEETDESET. Ser319 bears the Phosphoserine mark.

The protein belongs to the CSTPP1 family. Interacts with PCM1. Interacts with TTLL1, TPGS1, TPGS2 and LRRC49; the interactions link CSTPP1 to the complex TPGC. Binds to alpha-tubulin.

The protein localises to the cytoplasm. The protein resides in the cytoskeleton. It is found in the microtubule organizing center. Its subcellular location is the centrosome. It localises to the centriolar satellite. Regulator of the tubulin polyglutamylase complex (TPGC) that controls cytoskeletal organization, nuclear shape, and cilium disassembly by balancing microtubule and actin assembly. Regulates the assembly and stability of the TPGC and thereby modulates polyglutamylation of the microtubule, which antagonizes MAP4 binding. In Pongo abelii (Sumatran orangutan), this protein is Centriolar satellite-associated tubulin polyglutamylase complex regulator 1 (CSTPP1).